A 537-amino-acid polypeptide reads, in one-letter code: MPSLLVLTFSACVLLGWALLADCTGGGGSGGAGPGRGRREREALPPQKIEVLVLLPQDDSYLFSLARVRPAIEYALRTVEGNATGRRLLPAGTRFQVAYEDSDCGNRALFSLVDRVAAARGAKPDLILGPVCEYAAAPVARLASHWDLPMLSAGALAAGFQHKDTEYSHLTRVAPSYAKMGEMMLALFRHHQWSRAVLVYSDDKLERNCFFTLEGVHEVFQEEGLHTSAYNFDETKDLDLEDIVRHIQASERVVIMCASSDTIRGIMLAAHRHGMTSGDYAFFNIELFNSSFYGDGSWKRGDKHDFEAKQAYSSLQTITLLRTVKPEFEKFSMEVKSSVEKQGLSEEDYVNMFVEGFHDAILLYVLALREVLRAGYSKKDGGKIIQQTWNRTFEGIAGQVSIDANGDRYGDFSVIAMTDTEAGTQEVIGDYFGKEGRFEMRPNVKYPWGPLKLRIDETRMVEHTNSSPCKASGGLEESAVTGIVVGALLGAGLLMAFYFFRKKYRITIERRNQQEESNVGKHRELREDSIRSHFSVA.

The signal sequence occupies residues 1 to 20; the sequence is MPSLLVLTFSACVLLGWALL. The propeptide occupies 21-41; it reads ADCTGGGGSGGAGPGRGRRER. The Extracellular segment spans residues 42 to 477; the sequence is EALPPQKIEV…PCKASGGLEE (436 aa). N-linked (GlcNAc...) asparagine glycosylation is present at asparagine 82. Intrachain disulfides connect cysteine 104–cysteine 132 and cysteine 209–cysteine 257. 2 N-linked (GlcNAc...) asparagine glycosylation sites follow: asparagine 289 and asparagine 390. The chain crosses the membrane as a helical span at residues 478 to 500; that stretch reads SAVTGIVVGALLGAGLLMAFYFF. Topologically, residues 501-537 are cytoplasmic; sequence RKKYRITIERRNQQEESNVGKHRELREDSIRSHFSVA.

The protein belongs to the ANF receptor family. Homodimer; disulfide-linked. Interacts with OSTN.

It is found in the cell membrane. Its function is as follows. Receptor for the natriuretic peptide hormones, binding with similar affinities atrial natriuretic peptide NPPA/ANP, brain natriuretic peptide NPPB/BNP, and C-type natriuretic peptide NPPC/CNP. May function as a clearance receptor for NPPA, NPPB and NPPC, regulating their local concentrations and effects. Acts as a regulator of osteoblast differentiation and bone growth by binding to its ligand osteocrin, thereby preventing binding between NPR3/NPR-C and natriuretic peptides, leading to increase cGMP production. The polypeptide is Atrial natriuretic peptide receptor 3 (NPR3) (Bos taurus (Bovine)).